A 361-amino-acid chain; its full sequence is Peptide chain release factor 1 (361 aa).

Q235 carries the N5-methylglutamine modification.

This sequence belongs to the prokaryotic/mitochondrial release factor family. In terms of processing, methylated by PrmC. Methylation increases the termination efficiency of RF1.

The protein localises to the cytoplasm. Peptide chain release factor 1 directs the termination of translation in response to the peptide chain termination codons UAG and UAA. This is Peptide chain release factor 1 from Xanthomonas campestris pv. campestris (strain 8004).